A 367-amino-acid polypeptide reads, in one-letter code: Flagellar P-ring protein (367 aa).

Residues 1 to 22 (MRRMLVIRWILAIHLIATQVFA) form the signal peptide.

This sequence belongs to the FlgI family. In terms of assembly, the basal body constitutes a major portion of the flagellar organelle and consists of four rings (L,P,S, and M) mounted on a central rod.

Its subcellular location is the periplasm. The protein resides in the bacterial flagellum basal body. In terms of biological role, assembles around the rod to form the L-ring and probably protects the motor/basal body from shearing forces during rotation. In Legionella pneumophila (strain Corby), this protein is Flagellar P-ring protein.